The sequence spans 134 residues: Large ribosomal subunit protein uL22 (134 aa).

This sequence belongs to the universal ribosomal protein uL22 family. As to quaternary structure, part of the 50S ribosomal subunit.

Functionally, this protein binds specifically to 23S rRNA; its binding is stimulated by other ribosomal proteins, e.g. L4, L17, and L20. It is important during the early stages of 50S assembly. It makes multiple contacts with different domains of the 23S rRNA in the assembled 50S subunit and ribosome. The globular domain of the protein is located near the polypeptide exit tunnel on the outside of the subunit, while an extended beta-hairpin is found that lines the wall of the exit tunnel in the center of the 70S ribosome. This Gluconacetobacter diazotrophicus (strain ATCC 49037 / DSM 5601 / CCUG 37298 / CIP 103539 / LMG 7603 / PAl5) protein is Large ribosomal subunit protein uL22.